A 136-amino-acid polypeptide reads, in one-letter code: DNA-directed RNA polymerase subunit omega (136 aa).

Over residues 90 to 102 the composition is skewed to low complexity; it reads SSPAAAAVAPQSS. The segment at 90–136 is disordered; that stretch reads SSPAAAAVAPQSSSDDKDVQFDRMSEEDLLRGLENLAPPTETDDEGE. The segment covering 103–120 has biased composition (basic and acidic residues); that stretch reads SDDKDVQFDRMSEEDLLR.

It belongs to the RNA polymerase subunit omega family. In terms of assembly, the RNAP catalytic core consists of 2 alpha, 1 beta, 1 beta' and 1 omega subunit. When a sigma factor is associated with the core the holoenzyme is formed, which can initiate transcription.

The catalysed reaction is RNA(n) + a ribonucleoside 5'-triphosphate = RNA(n+1) + diphosphate. Its function is as follows. Promotes RNA polymerase assembly. Latches the N- and C-terminal regions of the beta' subunit thereby facilitating its interaction with the beta and alpha subunits. The chain is DNA-directed RNA polymerase subunit omega from Methylorubrum populi (strain ATCC BAA-705 / NCIMB 13946 / BJ001) (Methylobacterium populi).